Consider the following 178-residue polypeptide: Mediator of RNA polymerase II transcription subunit 28 (178 aa).

The interval 1–25 (MAAPLGGMFSGQQPGPPQPPPGLLG) is disordered. Residues 109–145 (QVIKEDVSELRNELQRKDALVQKHLTKLRHWQQVLED) adopt a coiled-coil conformation.

It belongs to the Mediator complex subunit 28 family. In terms of assembly, component of the Mediator complex, which is composed of MED1, MED4, MED6, MED7, MED8, MED9, MED10, MED11, MED12, MED13, MED13L, MED14, MED15, MED16, MED17, MED18, MED19, MED20, MED21, MED22, MED23, MED24, MED25, MED26, MED27, MED29, MED30, MED31, CCNC, CDK8 and CDC2L6/CDK11. The MED12, MED13, CCNC and CDK8 subunits form a distinct module termed the CDK8 module. Mediator containing the CDK8 module is less active than Mediator lacking this module in supporting transcriptional activation. Individual preparations of the Mediator complex lacking one or more distinct subunits have been variously termed ARC, CRSP, DRIP, PC2, SMCC and TRAP. Forms a ternary complex with NF2/merlin and GRB2. Binds to actin.

The protein resides in the nucleus. Its subcellular location is the cytoplasm. It is found in the membrane. Its function is as follows. Component of the Mediator complex, a coactivator involved in the regulated transcription of nearly all RNA polymerase II-dependent genes. Mediator functions as a bridge to convey information from gene-specific regulatory proteins to the basal RNA polymerase II transcription machinery. Mediator is recruited to promoters by direct interactions with regulatory proteins and serves as a scaffold for the assembly of a functional preinitiation complex with RNA polymerase II and the general transcription factors. May be part of a complex containing NF2/merlin that participates in cellular signaling to the actin cytoskeleton downstream of tyrosine kinase signaling pathways. This Bos taurus (Bovine) protein is Mediator of RNA polymerase II transcription subunit 28 (MED28).